A 2290-amino-acid polypeptide reads, in one-letter code: Armadillo repeat-containing X-linked protein 4 (2290 aa).

Residues 7–24 (VGWVTAGLVIWAGTCYYI) traverse the membrane as a helical segment. Disordered stretches follow at residues 517–549 (QGEA…TCTQ), 564–583 (SRVD…TKAD), 967–988 (KVRG…VGSA), 1014–1087 (AVPK…ACRK), 1302–1430 (GSWA…ANSG), 1521–1715 (GSWG…RSED), 1911–1931 (SNTF…AGDN), and 1954–1973 (NENT…KSSE). The segment covering 526–536 (GKARGKAKAKC) has biased composition (basic residues). Positions 1073-1087 (TSESEGGSGTQACRK) are enriched in polar residues. 2 stretches are compositionally biased toward gly residues: residues 1328–1341 (SWAG…GGSM) and 1403–1414 (AGAGGQAGGGSK). Polar residues predominate over residues 1419–1430 (DQSSGRSWANSG). Gly residues predominate over residues 1521–1535 (GSWGGASGQDVGGSR). A compositionally biased stretch (polar residues) spans 1537-1558 (GPTNQSSAGSWDSPGSQVSGSC). Gly residues-rich tracts occupy residues 1581 to 1598 (IGGG…GGSR) and 1609 to 1623 (GSWG…GGAR). The segment covering 1628–1645 (DQSSGGSWAGTGNQSSGR) has biased composition (polar residues). Positions 1674-1687 (GAGSQASGESWAGS) are enriched in low complexity. ARM repeat units follow at residues 2031–2071 (RCKH…NSAD), 2073–2112 (SYSH…NISV), 2153–2192 (ITSE…NFSK), and 2194–2234 (PSMT…NINY).

The protein belongs to the eutherian X-chromosome-specific Armcx family.

Its subcellular location is the membrane. This chain is Armadillo repeat-containing X-linked protein 4 (ARMCX4), found in Homo sapiens (Human).